Here is a 401-residue protein sequence, read N- to C-terminus: Multidrug resistance protein MdtH (401 aa).

Helical transmembrane passes span 13 to 33 (YFLLFDNLLVVLGFFVVFPLI), 34 to 54 (SIRFVDQLGWAALVVGLALGL), 99 to 116 (PWILWLACALSGLGGTLF), 139 to 159 (LLMMQDSAGAVIGALIGSWLL), 165 to 185 (FVCWTGAAIFVLAAGWNAWLL), 214 to 234 (VLTLTGYYMLAVQVMLMLPIV), 243 to 263 (AAVKWMYAIEAALSLTLLYPL), 277 to 297 (LMAGLLIMTLSLFPIGMITHL), 299 to 319 (TLFMFICFFYMGSILAEPARE), 340 to 360 (LGLALGGALGYTGGGWMYDTG), and 368 to 388 (LPWFLLGIIGLITLAGLYWQF).

The protein belongs to the major facilitator superfamily. DHA1 family. MdtH (TC 2.A.1.2.21) subfamily.

It is found in the cell inner membrane. In Yersinia pseudotuberculosis serotype O:1b (strain IP 31758), this protein is Multidrug resistance protein MdtH.